Reading from the N-terminus, the 340-residue chain is Putative phosphatidylcholine:ceramide cholinephosphotransferase 3 (340 aa).

The interval 1–25 (MGSVSKTVISARGASPDDEQNGTKN) is disordered. 4 consecutive transmembrane segments (helical) span residues 36–56 (CIFL…VLAY), 81–101 (SSLG…LLVI), 178–198 (LLFS…AYYL), and 202–222 (IKPL…CMTI). Residue H183 is part of the active site. At 223–340 (SRTHYTIDVV…SSSSTYPLPC (118 aa)) the chain is on the cytoplasmic side. Catalysis depends on residues H226 and D230. A disordered region spans residues 294–313 (STPRGQERGGASAESSDSSV).

This sequence belongs to the sphingomyelin synthase family.

Its subcellular location is the membrane. It catalyses the reaction an N-acyl-sphingoid base + a 1,2-diacyl-sn-glycero-3-phosphocholine = an N-(acyl)-sphingosylphosphocholine + a 1,2-diacyl-sn-glycerol. The enzyme catalyses an N-acylsphing-4-enine + a 1,2-diacyl-sn-glycero-3-phosphocholine = a sphingomyelin + a 1,2-diacyl-sn-glycerol. The catalysed reaction is an N-acyl-15-methylhexadecasphing-4-enine + a 1,2-diacyl-sn-glycero-3-phosphocholine = an N-acyl-15-methylhexadecasphing-4-enine-1-phosphocholine + a 1,2-diacyl-sn-glycerol. Its pathway is lipid metabolism; sphingolipid metabolism. Bidirectional lipid cholinephosphotransferase capable of converting phosphatidylcholine (PC) and ceramide to sphingomyelin (SM) and diacylglycerol (DAG) and vice versa. Direction is dependent on the relative concentrations of DAG and ceramide as phosphocholine acceptors. Directly and specifically recognizes the choline head group on the substrate. Also requires two fatty chains on the choline-P donor molecule in order to be recognized efficiently as a substrate. Does not function strictly as a SM synthase. C.elegans contains specific sphingoid bases, which are unique or different in structure compared to the sphingoid bases found in other animals. Two examples of these distinctive compounds are: 15-methylhexadecasphinganine and 15-methylhexadecasphing-4-enine. This chain is Putative phosphatidylcholine:ceramide cholinephosphotransferase 3 (sms-3), found in Caenorhabditis elegans.